The primary structure comprises 340 residues: Guanine nucleotide-binding protein G(I)/G(S)/G(T) subunit beta-2 (340 aa).

Ser-2 carries the post-translational modification N-acetylserine. 7 WD repeats span residues 53 to 83 (GHLA…IIWD), 95 to 125 (LRSS…SIYS), 141 to 170 (GHTG…ALWD), 182 to 212 (GHSG…KLWD), 224 to 254 (GHES…RLFD), 268 to 298 (NIIC…NIWD), and 310 to 340 (GHDN…KIWN). Residue Tyr-239 is modified to Phosphotyrosine.

This sequence belongs to the WD repeat G protein beta family. G proteins are composed of 3 units, alpha, beta and gamma. In this context, interacts with GNAI2 and GNG2. Interacts with ARHGEF18 and RASD2. Interacts with ATXN10. Interacts with SCN8A. In terms of tissue distribution, expressed in all cardiac subcompartments and in the brain, with highest levels in the atrioventricular node and brain.

Its subcellular location is the cytoplasm. It localises to the perinuclear region. The protein localises to the cell membrane. Guanine nucleotide-binding proteins (G proteins) are involved as a modulator or transducer in various transmembrane signaling systems. The beta and gamma chains are required for the GTPase activity, for replacement of GDP by GTP, and for G protein-effector interaction. In Homo sapiens (Human), this protein is Guanine nucleotide-binding protein G(I)/G(S)/G(T) subunit beta-2 (GNB2).